A 525-amino-acid polypeptide reads, in one-letter code: GMP synthase [glutamine-hydrolyzing] (525 aa).

Residues 9–207 form the Glutamine amidotransferase type-1 domain; that stretch reads RILILDFGSQ…VVDICKCEKL (199 aa). C86 functions as the Nucleophile in the catalytic mechanism. Catalysis depends on residues H181 and E183. In terms of domain architecture, GMPS ATP-PPase spans 208-400; sequence WTSASIIDDA…LGLPYDMLYR (193 aa). Residue 235–241 coordinates ATP; sequence SGGVDSS.

Homodimer.

The enzyme catalyses XMP + L-glutamine + ATP + H2O = GMP + L-glutamate + AMP + diphosphate + 2 H(+). The protein operates within purine metabolism; GMP biosynthesis; GMP from XMP (L-Gln route): step 1/1. In terms of biological role, catalyzes the synthesis of GMP from XMP. The polypeptide is GMP synthase [glutamine-hydrolyzing] (Colwellia psychrerythraea (strain 34H / ATCC BAA-681) (Vibrio psychroerythus)).